The sequence spans 246 residues: Ureidoacrylate amidohydrolase RutB (246 aa).

Positions 1–27 are disordered; that stretch reads MSAVTAAGYQAPQERSQSVTLPARPEP. Catalysis depends on D41, which acts as the Proton acceptor. Residue K150 is part of the active site. The active-site Nucleophile is C183.

This sequence belongs to the isochorismatase family. RutB subfamily.

It carries out the reaction (Z)-3-ureidoacrylate + H2O + H(+) = (Z)-3-aminoacrylate + NH4(+) + CO2. The catalysed reaction is (Z)-3-ureidoacrylate + H2O = (Z)-3-aminoacrylate + carbamate + H(+). It catalyses the reaction (Z)-2-methylureidoacrylate + H2O + H(+) = (Z)-2-methylaminoacrylate + NH4(+) + CO2. Functionally, hydrolyzes ureidoacrylate to form aminoacrylate and carbamate. The carbamate hydrolyzes spontaneously, thereby releasing one of the nitrogen atoms of the pyrimidine ring as ammonia and one of its carbon atoms as CO2. The polypeptide is Ureidoacrylate amidohydrolase RutB (Rhizobium rhizogenes (strain K84 / ATCC BAA-868) (Agrobacterium radiobacter)).